The primary structure comprises 368 residues: Divinyl chlorophyll a/b light-harvesting protein PcbA (368 aa).

Helical transmembrane passes span 27-47 (FIAS…ANTL), 63-83 (GFVV…NGVI), 89-109 (MLVV…GAML), 203-223 (VMGG…WHIF), 243-263 (FVLS…AFWA), and 307-327 (LSNF…WHGL).

This sequence belongs to the PsbB/PsbC family. IsiA/Pcb subfamily. As to quaternary structure, the antenna complex consists of divinyl chlorophylls (a and b) and divinyl chlorophyll a/b binding proteins. Forms complexes with PSII, consisting of a PSII dimer and 4 or 8 PcbA subunits. These complexes are also found under conditions of iron-starvation. It depends on divinyl chlorophyll a as a cofactor. Divinyl chlorophyll b serves as cofactor.

The protein resides in the cellular thylakoid membrane. In terms of biological role, the antenna complex functions as a light receptor, it captures and delivers excitation energy to photosystems II. The Prochlorales pcb genes are not related to higher plant LHCs. In Prochlorococcus marinus (strain MIT 9313), this protein is Divinyl chlorophyll a/b light-harvesting protein PcbA (pcbA).